The following is an 86-amino-acid chain: Precursor of CEP4 (86 aa).

Positions 1 to 30 are cleaved as a signal peptide; sequence MVSRGCSITVLFRFLIVLLVIQVHFENTKA. The propeptide occupies 31-64; the sequence is ARHAPVVSWSPPEPPKDDFVWYHKINRFKNIEQD. Residues 63–86 are disordered; that stretch reads QDAFRPTHQGPSQGIGHKNPPGAP. A hydroxyproline mark is found at P68 and P73. Positions 80–86 are excised as a propeptide; sequence KNPPGAP.

The protein belongs to the C-terminally encoded plant signaling peptide (CEP) family. As to quaternary structure, interacts with CEP receptors (e.g. CEPR1 and CEPR2). In terms of processing, the mature small signaling peptide is generated by proteolytic processing of the longer precursor. As to expression, expressed at low levels in flowers. Present in lateral roots, shoot apical meristem (SAM), flowers and siliques.

Its subcellular location is the secreted. The protein localises to the extracellular space. The protein resides in the apoplast. Extracellular signaling peptide that represses primary root growth rate. Promotes shoot growth and modulates leaf morphology. Regulates systemic nitrogen (N)-demand signaling. Mediates up-regulation of genes involved in N uptake and assimilation pathways. The sequence is that of Precursor of CEP4 from Arabidopsis thaliana (Mouse-ear cress).